Reading from the N-terminus, the 1478-residue chain is DNA-directed RNA polymerase subunit beta' (1478 aa).

Mg(2+) contacts are provided by Asp-535, Asp-537, and Asp-539. Positions 1034, 1109, 1116, and 1119 each coordinate Zn(2+).

The protein belongs to the RNA polymerase beta' chain family. In terms of assembly, the RNAP catalytic core consists of 2 alpha, 1 beta, 1 beta' and 1 omega subunit. When a sigma factor is associated with the core the holoenzyme is formed, which can initiate transcription. Mg(2+) serves as cofactor. It depends on Zn(2+) as a cofactor.

It catalyses the reaction RNA(n) + a ribonucleoside 5'-triphosphate = RNA(n+1) + diphosphate. Its function is as follows. DNA-dependent RNA polymerase catalyzes the transcription of DNA into RNA using the four ribonucleoside triphosphates as substrates. This is DNA-directed RNA polymerase subunit beta' from Mycoplasmopsis agalactiae (strain NCTC 10123 / CIP 59.7 / PG2) (Mycoplasma agalactiae).